The chain runs to 527 residues: Mitogen-activated protein kinase kinae MKK2 (527 aa).

2 disordered regions span residues 1–143 (MHDQ…SAGS) and 156–189 (IGSTRPQGTPDPASAVGSIYSERSDGGAGMDKDG). Over residues 107–129 (QQGQSASGGSESSAAHSRSGSFG) the composition is skewed to low complexity. Residues 134–143 (RTSNPTSAGS) show a composition bias toward polar residues. Residues 177–189 (ERSDGGAGMDKDG) are compositionally biased toward basic and acidic residues. The Protein kinase domain occupies 227–497 (IVELGGLGEG…PWRMLEHPWM (271 aa)). ATP contacts are provided by residues 233–241 (LGEGAGGAV) and lysine 256.

The protein belongs to the protein kinase superfamily. STE Ser/Thr protein kinase family. MAP kinase kinase subfamily. Interacts with the adapter protein MST50.

The enzyme catalyses L-seryl-[protein] + ATP = O-phospho-L-seryl-[protein] + ADP + H(+). The catalysed reaction is L-threonyl-[protein] + ATP = O-phospho-L-threonyl-[protein] + ADP + H(+). Its function is as follows. Mitogen-activated protein kinase kinase; part of the MCK1-MKK2-MPS1 MAP kinase (MAPK) signal transduction cascade that is essential for appressorium formation, penetration and invasive growth. Beside its role in pathogenesis, the MPS1 cascade is active in conidiation and cellular stress responses. Targets downstream of the the MPS1-MAPK pathway include transcription factors MIG1 and SWI6, as well as GSK1 and MPG1. This chain is Mitogen-activated protein kinase kinae MKK2, found in Pyricularia oryzae (strain 70-15 / ATCC MYA-4617 / FGSC 8958) (Rice blast fungus).